We begin with the raw amino-acid sequence, 135 residues long: MKPSERRKARRLAVQAIYSWQLSGNNIADVEHEFLTEQDVAGVDIAYFRELLGGVATKKSQLDELITPFVTRPLDEVDPVEKAIVRIATYELTFRKDVPYKVAINEAIELAKAFGAEDGHKFVNGILDKLVARNK.

The protein belongs to the NusB family.

Functionally, involved in transcription antitermination. Required for transcription of ribosomal RNA (rRNA) genes. Binds specifically to the boxA antiterminator sequence of the ribosomal RNA (rrn) operons. The chain is Transcription antitermination protein NusB from Shewanella pealeana (strain ATCC 700345 / ANG-SQ1).